Consider the following 302-residue polypeptide: Pseudouridine-5'-phosphate glycosidase (302 aa).

Glutamate 25 functions as the Proton donor in the catalytic mechanism. Substrate is bound by residues lysine 86 and valine 106. Aspartate 138 serves as a coordination point for Mn(2+). Substrate is bound at residue 140–142 (SAD). Lysine 159 acts as the Nucleophile in catalysis.

It belongs to the pseudouridine-5'-phosphate glycosidase family. In terms of assembly, homotrimer. Mn(2+) serves as cofactor.

It carries out the reaction D-ribose 5-phosphate + uracil = psi-UMP + H2O. In terms of biological role, catalyzes the reversible cleavage of pseudouridine 5'-phosphate (PsiMP) to ribose 5-phosphate and uracil. Functions biologically in the cleavage direction, as part of a pseudouridine degradation pathway. This is Pseudouridine-5'-phosphate glycosidase from Glaesserella parasuis serovar 5 (strain SH0165) (Haemophilus parasuis).